A 77-amino-acid polypeptide reads, in one-letter code: U11-lycotoxin-Ls1a (77 aa).

Positions Met-1–Ala-20 are cleaved as a signal peptide. A propeptide spanning residues Glu-21–Arg-26 is cleaved from the precursor.

The protein belongs to the neurotoxin 19 (CSTX) family. 10 (U11-Lctx) subfamily. In terms of processing, contains 4 disulfide bonds. As to expression, expressed by the venom gland.

The protein localises to the secreted. This Lycosa singoriensis (Wolf spider) protein is U11-lycotoxin-Ls1a.